The following is a 95-amino-acid chain: MAHKKGTGSTRNGRDSNSQRLGVKRYGGQVVKAGNILVRQRGSKFHAGNNVGVGKDYTLFALVEGMVTFERKGKSRKKVSVYPLAQEANVAVDQA.

The segment at 1–24 (MAHKKGTGSTRNGRDSNSQRLGVK) is disordered. Residues 7–20 (TGSTRNGRDSNSQR) are compositionally biased toward polar residues.

It belongs to the bacterial ribosomal protein bL27 family.

The polypeptide is Large ribosomal subunit protein bL27 (Trichodesmium erythraeum (strain IMS101)).